A 237-amino-acid polypeptide reads, in one-letter code: Small ribosomal subunit protein uS2m (237 aa).

It belongs to the universal ribosomal protein uS2 family.

Its subcellular location is the mitochondrion. This chain is Small ribosomal subunit protein uS2m (RPS2), found in Marchantia polymorpha (Common liverwort).